The primary structure comprises 324 residues: Olfactory receptor 2T2 (324 aa).

At 1–26 (MGMEGLLQNSTNFVLTGLITHPAFPG) the chain is on the extracellular side. N-linked (GlcNAc...) asparagine glycosylation occurs at asparagine 9. The helical transmembrane segment at 27–50 (LLFAIVFSIFVVAITANLVMILLI) threads the bilayer. Over 51-58 (HMDSRLHT) the chain is Cytoplasmic. A helical transmembrane segment spans residues 59-80 (PMYFLLSQLSIMDTIYICITVP). At 81-101 (KMLQDLLSKDKTISFLGCAVQ) the chain is on the extracellular side. The cysteines at positions 98 and 190 are disulfide-linked. A helical membrane pass occupies residues 102 to 121 (IFLYLTLIGGEFFLLGLMAY). Residues 122-140 (DRYVAVCNPLRYPLLMNRR) are Cytoplasmic-facing. The helical transmembrane segment at 141-159 (VCLFMVVGSWVGGSLDGFM) threads the bilayer. Over 160 to 196 (LTPVTMSFPFCRSREINHFFCEIPAVLKLSCTDTSLY) the chain is Extracellular. The chain crosses the membrane as a helical span at residues 197-220 (ETLMYACCVLMLLIPLSVISVSYT). The Cytoplasmic portion of the chain corresponds to 221–237 (HILLTVHRMNSAEGRRK). The chain crosses the membrane as a helical span at residues 238–260 (AFATCSSHIMVVSVFYGAAFYTN). Over 261–273 (VLPHSYHTPEKDK) the chain is Extracellular. The chain crosses the membrane as a helical span at residues 274 to 293 (VVSAFYTILTPMLNPLIYSL). Residues 294–324 (RNKDVAAALRKVLGRCGSSQSIRVATVIRKG) lie on the Cytoplasmic side of the membrane.

It belongs to the G-protein coupled receptor 1 family.

It localises to the cell membrane. Odorant receptor. The protein is Olfactory receptor 2T2 (OR2T2) of Homo sapiens (Human).